The following is a 168-amino-acid chain: UPF0178 protein RBAM_023530 (168 aa).

The protein belongs to the UPF0178 family.

The sequence is that of UPF0178 protein RBAM_023530 from Bacillus velezensis (strain DSM 23117 / BGSC 10A6 / LMG 26770 / FZB42) (Bacillus amyloliquefaciens subsp. plantarum).